Here is a 492-residue protein sequence, read N- to C-terminus: Stomatal closure-related actin-binding protein 2 (492 aa).

A coiled-coil region spans residues 112 to 132; the sequence is LKKLRDALETMRGRMDGRNRE.

It belongs to the SCAB family. As to expression, expressed in roots, stems, leaves, siliques and flowers.

The protein localises to the cytoplasm. It localises to the cytoskeleton. Its function is as follows. Probable plant-specific actin binding protein that bundles and stabilizes microfilaments (MFs). In Arabidopsis thaliana (Mouse-ear cress), this protein is Stomatal closure-related actin-binding protein 2.